The sequence spans 437 residues: Phosphoribosylamine--glycine ligase (437 aa).

The 213-residue stretch at 110–322 (KNLLRSADIP…LVEVMQAVVD (213 aa)) folds into the ATP-grasp domain. 142-203 (EPTDPVNVVV…EERLTGPEVS (62 aa)) is an ATP binding site. Mg(2+) contacts are provided by glutamate 292 and asparagine 294.

Belongs to the GARS family. Mg(2+) serves as cofactor. The cofactor is Mn(2+).

It carries out the reaction 5-phospho-beta-D-ribosylamine + glycine + ATP = N(1)-(5-phospho-beta-D-ribosyl)glycinamide + ADP + phosphate + H(+). The protein operates within purine metabolism; IMP biosynthesis via de novo pathway; N(1)-(5-phospho-D-ribosyl)glycinamide from 5-phospho-alpha-D-ribose 1-diphosphate: step 2/2. This Rhodopirellula baltica (strain DSM 10527 / NCIMB 13988 / SH1) protein is Phosphoribosylamine--glycine ligase.